A 332-amino-acid chain; its full sequence is Tryptophan--tRNA ligase (332 aa).

ATP-binding positions include 13 to 15 (KPS) and 21 to 22 (GN). Residues 14 to 22 (PSGDLTLGN) carry the 'HIGH' region motif. Position 137 (Asp-137) interacts with L-tryptophan. ATP contacts are provided by residues 149-151 (GKD), Ile-188, and 197-201 (KMSKS). A 'KMSKS' region motif is present at residues 197–201 (KMSKS).

Belongs to the class-I aminoacyl-tRNA synthetase family. As to quaternary structure, homodimer.

It localises to the cytoplasm. The enzyme catalyses tRNA(Trp) + L-tryptophan + ATP = L-tryptophyl-tRNA(Trp) + AMP + diphosphate + H(+). Its function is as follows. Catalyzes the attachment of tryptophan to tRNA(Trp). In Clostridium perfringens (strain 13 / Type A), this protein is Tryptophan--tRNA ligase.